Consider the following 479-residue polypeptide: Phosphatidylinositol 4-kinase type 2-beta (479 aa).

Residues Met-1–Glu-10 are compositionally biased toward acidic residues. A disordered region spans residues Met-1–His-91. A compositionally biased stretch (low complexity) spans Pro-18–Ala-34. A compositionally biased stretch (acidic residues) spans Gly-42–Glu-62. The region spanning Gly-118–Arg-449 is the PI3K/PI4K catalytic domain. The G-loop stretch occupies residues Ile-124–Gly-130. Residues Ser-131 and Lys-146 each contribute to the ATP site. The important for substrate binding stretch occupies residues Glu-151–Tyr-153. Residues Lys-159–Cys-172 form an important for interaction with membranes region. ATP-binding positions include Gln-255 to Val-258 and Arg-269 to Lys-270. The tract at residues Lys-262–Lys-270 is important for interaction with membranes. The segment at Arg-299–Asn-307 is catalytic loop. The interval Ala-340–Phe-360 is activation loop. ATP is bound at residue Asp-342. Residues Trp-355–Trp-364 are important for interaction with membranes.

Belongs to the PI3/PI4-kinase family. Type II PI4K subfamily.

It is found in the cytoplasm. Its subcellular location is the cytosol. The protein localises to the golgi apparatus membrane. It localises to the endoplasmic reticulum membrane. The protein resides in the cell membrane. It is found in the early endosome membrane. It catalyses the reaction a 1,2-diacyl-sn-glycero-3-phospho-(1D-myo-inositol) + ATP = a 1,2-diacyl-sn-glycero-3-phospho-(1D-myo-inositol 4-phosphate) + ADP + H(+). Its function is as follows. Contributes to the overall PI4-kinase activity of the cell. This contribution may be especially significant in plasma membrane, endosomal and Golgi compartments. The phosphorylation of phosphatidylinositol (PI) to PI4P is the first committed step in the generation of phosphatidylinositol 4,5-bisphosphate (PIP2), a precursor of the second messenger inositol 1,4,5-trisphosphate (InsP3). This chain is Phosphatidylinositol 4-kinase type 2-beta (PI4K2B), found in Gallus gallus (Chicken).